Here is a 351-residue protein sequence, read N- to C-terminus: Methylthioribose-1-phosphate isomerase (351 aa).

Substrate is bound by residues 55-57 (RGA), arginine 95, and glutamine 202. Aspartate 243 acts as the Proton donor in catalysis. 253–254 (NK) provides a ligand contact to substrate.

It belongs to the eIF-2B alpha/beta/delta subunits family. MtnA subfamily.

The catalysed reaction is 5-(methylsulfanyl)-alpha-D-ribose 1-phosphate = 5-(methylsulfanyl)-D-ribulose 1-phosphate. It functions in the pathway amino-acid biosynthesis; L-methionine biosynthesis via salvage pathway; L-methionine from S-methyl-5-thio-alpha-D-ribose 1-phosphate: step 1/6. In terms of biological role, catalyzes the interconversion of methylthioribose-1-phosphate (MTR-1-P) into methylthioribulose-1-phosphate (MTRu-1-P). In Marinobacter nauticus (strain ATCC 700491 / DSM 11845 / VT8) (Marinobacter aquaeolei), this protein is Methylthioribose-1-phosphate isomerase.